A 621-amino-acid polypeptide reads, in one-letter code: Chaperone protein DnaK (621 aa).

Thr179 is subject to Phosphothreonine; by autocatalysis. Residues 583–605 (SQVQDTQGAAQGQSQGNPQQTAD) are compositionally biased toward polar residues. Residues 583–621 (SQVQDTQGAAQGQSQGNPQQTADNRGKVVDAEIVDENKE) form a disordered region. Basic and acidic residues predominate over residues 606–621 (NRGKVVDAEIVDENKE).

The protein belongs to the heat shock protein 70 family.

In terms of biological role, acts as a chaperone. The sequence is that of Chaperone protein DnaK from Endomicrobium trichonymphae.